We begin with the raw amino-acid sequence, 202 residues long: Putative 3-methyladenine DNA glycosylase (202 aa).

The protein belongs to the DNA glycosylase MPG family.

This Rhodopseudomonas palustris (strain BisB5) protein is Putative 3-methyladenine DNA glycosylase.